The following is a 259-amino-acid chain: Ribosomal RNA small subunit methyltransferase J (259 aa).

S-adenosyl-L-methionine-binding positions include 101–102 (RD), 117–118 (ER), 153–154 (SS), and Asp-176.

The protein belongs to the methyltransferase superfamily. RsmJ family.

It localises to the cytoplasm. It catalyses the reaction guanosine(1516) in 16S rRNA + S-adenosyl-L-methionine = N(2)-methylguanosine(1516) in 16S rRNA + S-adenosyl-L-homocysteine + H(+). In terms of biological role, specifically methylates the guanosine in position 1516 of 16S rRNA. The sequence is that of Ribosomal RNA small subunit methyltransferase J from Vibrio parahaemolyticus serotype O3:K6 (strain RIMD 2210633).